Consider the following 183-residue polypeptide: ATP-dependent protease subunit HslV (183 aa).

Thr10 is a catalytic residue. Ala164, Cys167, and Thr170 together coordinate Na(+).

Belongs to the peptidase T1B family. HslV subfamily. In terms of assembly, a double ring-shaped homohexamer of HslV is capped on each side by a ring-shaped HslU homohexamer. The assembly of the HslU/HslV complex is dependent on binding of ATP.

It is found in the cytoplasm. It carries out the reaction ATP-dependent cleavage of peptide bonds with broad specificity.. With respect to regulation, allosterically activated by HslU binding. In terms of biological role, protease subunit of a proteasome-like degradation complex believed to be a general protein degrading machinery. The protein is ATP-dependent protease subunit HslV of Rhizorhabdus wittichii (strain DSM 6014 / CCUG 31198 / JCM 15750 / NBRC 105917 / EY 4224 / RW1) (Sphingomonas wittichii).